A 179-amino-acid polypeptide reads, in one-letter code: Cell division protein SepF (179 aa).

The tract at residues 22-55 (LPYEKRDEPVFTSVNSSQEPALPMNQPSQSAGTK) is disordered. Positions 33–55 (TSVNSSQEPALPMNQPSQSAGTK) are enriched in polar residues.

The protein belongs to the SepF family. Homodimer. Interacts with FtsZ.

The protein resides in the cytoplasm. Its function is as follows. Cell division protein that is part of the divisome complex and is recruited early to the Z-ring. Probably stimulates Z-ring formation, perhaps through the cross-linking of FtsZ protofilaments. Its function overlaps with FtsA. The protein is Cell division protein SepF of Streptococcus pneumoniae (strain Taiwan19F-14).